The sequence spans 887 residues: Golgin IMH1 (887 aa).

4 disordered regions span residues 16–50 (LAKG…EELP), 142–214 (QESL…MKSQ), 240–301 (GASQ…SAGD), and 783–822 (LKMS…SISS). Basic and acidic residues-rich tracts occupy residues 37 to 50 (GRRE…EELP) and 145 to 210 (LEQR…HAAE). The stretch at 118 to 241 (AMLTEEIKRI…YKSTIQELGA (124 aa)) forms a coiled coil. The segment covering 240–254 (GASQATGEAQPSSEA) has biased composition (polar residues). The segment covering 258-273 (RGKKGKGKRGKGKKRV) has biased composition (basic residues). Residues 299 to 788 (AGDEIIEAIE…LSTQLKMSKD (490 aa)) are a coiled coil. The segment covering 788 to 807 (DMSSQSRHSSRSGSLVSPSS) has biased composition (low complexity). Polar residues predominate over residues 808–822 (DNETGNSPRKISISS). Residues 837-885 (EMESNEKLAYIRNVLLGFLEHREQRSQLLPVVSTLLQLSSHDEKRLLTS) enclose the GRIP domain.

The protein localises to the cytoplasm. It localises to the golgi apparatus membrane. In terms of biological role, involved in vesicular transport between an endosomal compartment and the Golgi apparatus. In Eremothecium gossypii (strain ATCC 10895 / CBS 109.51 / FGSC 9923 / NRRL Y-1056) (Yeast), this protein is Golgin IMH1 (IMH1).